A 260-amino-acid chain; its full sequence is Snake venom serine proteinase 4a (260 aa).

The N-terminal stretch at 1–18 is a signal peptide; that stretch reads MVLIRVLANLLILQLSYA. The propeptide occupies 19 to 24; that stretch reads QMSSEL. Residues 25-251 form the Peptidase S1 domain; the sequence is VTGGDECNRN…HLDWIQRIIA (227 aa). 6 disulfides stabilise this stretch: Cys31–Cys163, Cys50–Cys66, Cys98–Cys258, Cys142–Cys212, Cys174–Cys191, and Cys202–Cys227. His65 (charge relay system) is an active-site residue. Asn103 carries N-linked (GlcNAc...) asparagine glycosylation. The active-site Charge relay system is the Asp110. Catalysis depends on Ser206, which acts as the Charge relay system.

This sequence belongs to the peptidase S1 family. Snake venom subfamily. As to quaternary structure, monomer. Expressed by the venom gland.

Its subcellular location is the secreted. Snake venom serine protease that may act in the hemostasis system of the prey. This is Snake venom serine proteinase 4a from Crotalus adamanteus (Eastern diamondback rattlesnake).